A 243-amino-acid chain; its full sequence is uncharacterized protein (243 aa).

This is an uncharacterized protein from Ureaplasma parvum serovar 3 (strain ATCC 700970).